A 156-amino-acid polypeptide reads, in one-letter code: Persephin (156 aa).

The first 21 residues, 1 to 21 (MAAGRLRILFLLLLSLHLGLG), serve as a signal peptide directing secretion. 3 disulfide bridges follow: cysteine 66–cysteine 124, cysteine 93–cysteine 152, and cysteine 97–cysteine 154.

The protein belongs to the TGF-beta family. GDNF subfamily. Homodimer; disulfide-linked. Interacts with GFRA4 coreceptor and RET: forms a 2:2:2 ternary complex composed of PSPN ligand, GFRA4 and RET receptor. As to expression, expressed at low levels in substantia nigra. Cochlea.

Its subcellular location is the secreted. In terms of biological role, growth factor that exhibits neurotrophic activity on mesencephalic dopaminergic and motor neurons. Acts by binding to its coreceptor, GFRA4, leading to autophosphorylation and activation of the RET receptor. This Rattus norvegicus (Rat) protein is Persephin.